A 79-amino-acid chain; its full sequence is Ubiquinol-cytochrome c reductase complex assembly factor 5 (79 aa).

Over 1–20 the chain is Mitochondrial matrix; it reads MSPYSGSVRRLLDSWPGKKR. Residues 21–43 form a helical membrane-spanning segment; it reads FGVYRFLPLFFLLGAGLEFSMIN. Residues 44 to 79 are Mitochondrial intermembrane-facing; that stretch reads WTVGETNFYRTFKRRQAKNYVEEQQHLQARAANNTN.

It belongs to the UQCC5 family. In terms of assembly, interacts with respiratory complex III components Uqcc1 and RFeSP; the interactions are probably involved in the assembly and stability of the mitochondrial ubiquinol-cytochrome c reductase complex. Interacts with sloth2; the interaction stabilizes both components. As to expression, expressed in the brain.

The protein localises to the mitochondrion inner membrane. It is found in the mitochondrion. In terms of biological role, required for the assembly and stability of the mitochondrial ubiquinol-cytochrome c reductase complex (complex III (CIII) or cytochrome b-c1 complex), a multisubunit transmembrane complex that is part of the mitochondrial electron transport chain (ETC) which drives oxidative phosphorylation. The protein is Ubiquinol-cytochrome c reductase complex assembly factor 5 of Drosophila melanogaster (Fruit fly).